A 569-amino-acid chain; its full sequence is Phenylalanine ammonia-lyase (569 aa).

The active-site Proton donor/acceptor is Tyr78. The 5-imidazolinone (Ala-Gly) cross-link spans 167 to 169; it reads ASG. At Ser168 the chain carries 2,3-didehydroalanine (Ser). Residues Asn223, Gln311, Arg317, Asn347, Lys419, Glu448, and Asn451 each contribute to the (E)-cinnamate site.

The protein belongs to the PAL/histidase family. Homotetramer. Contains an active site 4-methylidene-imidazol-5-one (MIO), which is formed autocatalytically by cyclization and dehydration of residues Ala-Ser-Gly.

It localises to the cytoplasm. The catalysed reaction is L-phenylalanine = (E)-cinnamate + NH4(+). It participates in phenylpropanoid metabolism; trans-cinnamate biosynthesis; trans-cinnamate from L-phenylalanine: step 1/1. Catalyzes the non-oxidative deamination of L-phenylalanine to form trans-cinnamic acid, the first step in the phenylpropanoid pathway. This is Phenylalanine ammonia-lyase from Nostoc punctiforme (strain ATCC 29133 / PCC 73102).